A 65-amino-acid chain; its full sequence is Large ribosomal subunit protein bL35 (65 aa).

This sequence belongs to the bacterial ribosomal protein bL35 family.

The polypeptide is Large ribosomal subunit protein bL35 (Borrelia duttonii (strain Ly)).